A 428-amino-acid polypeptide reads, in one-letter code: Hydrolase acrC (428 aa).

Residue serine 248 is part of the active site.

This sequence belongs to the AB hydrolase superfamily. FUS2 hydrolase family.

It functions in the pathway secondary metabolite biosynthesis. Hydrolase; part of the cluster that mediates the biosynthesis of acurin A, a highly reduced polyketide coupled to a serine via a peptide bond. The activities of the highly reducing polyketide synthase acrA and the nonribosomal peptide synthetase acrB are collectively responsible for the synthesis of the acurin A core structure with a heptaketide backbone produced by acrA covalently fused to a L-serine by acrB. After the formation of the PK-NRP hybrid product, it is detached from acrB by reductive release to set up the formation of the lactam ring by aldol condensation. The hydrolyase acrC then catalyzes water loss to generate a double bond in the ring. This double bond is probably reduced, which is followed by three oxidations at C-22 to generate the carboxylic acid moiety, involving probably the FAD-binding monooxygenase acrE and the cytochrome P450 monooxygenases acrD and acrF. Finally, a last methylation step performed by the O-methyltransferase acrG leads to the production of acurin A. The protein is Hydrolase acrC of Aspergillus aculeatus (strain ATCC 16872 / CBS 172.66 / WB 5094).